The primary structure comprises 81 residues: Cytotoxin 5b (81 aa).

The N-terminal stretch at 1-21 (MKTLLLTLLVVTIVCLDLGYT) is a signal peptide. Intrachain disulfides connect Cys-24–Cys-42, Cys-35–Cys-59, Cys-63–Cys-74, and Cys-75–Cys-80.

Belongs to the three-finger toxin family. Short-chain subfamily. Type IA cytotoxin sub-subfamily. Monomer in solution; Homodimer and oligomer in the presence of negatively charged lipids forming a pore with a size ranging between 20 and 30 Angstroms. As to expression, expressed by the venom gland.

It is found in the secreted. The protein resides in the target cell membrane. Shows cytolytic activity on many different cells by forming pore in lipid membranes. In vivo, increases heart rate or kills the animal by cardiac arrest. In addition, it binds to heparin with high affinity, interacts with Kv channel-interacting protein 1 (KCNIP1) in a calcium-independent manner, and binds to integrin alpha-V/beta-3 (ITGAV/ITGB3) with moderate affinity. In Naja sputatrix (Malayan spitting cobra), this protein is Cytotoxin 5b.